A 719-amino-acid chain; its full sequence is Potassium channel KOR2 (719 aa).

The Cytoplasmic portion of the chain corresponds to 1–63; sequence MAEEYELNEI…VIHPNGRWYR (63 aa). The chain crosses the membrane as a helical span at residues 64–84; it reads IWANMMFLWSIYSTFFTPFEF. The Extracellular segment spans residues 85–93; it reads SFFRGLPDQ. The chain crosses the membrane as a helical span at residues 94 to 114; that stretch reads LLDLECVQLVFLADVAVHFFL. Residues 115 to 137 lie on the Cytoplasmic side of the membrane; that stretch reads AYRDPHTYRMVHDKRHIALRYIK. A helical membrane pass occupies residues 138 to 158; sequence GSFALDVLGCFPWDAIYKVTG. Residues 159–164 lie on the Extracellular side of the membrane; sequence RVEAVR. The helical; Voltage-sensor transmembrane segment at 165-185 threads the bilayer; the sequence is WLVWVRLYRGRKVMAFFKRVE. Residues 186–199 lie on the Cytoplasmic side of the membrane; it reads KDIRVSYLLTRIVK. A helical membrane pass occupies residues 200-220; it reads LITVELYCTHTAACGFYYLAT. Over 221 to 255 the chain is Extracellular; the sequence is TLPPAREGGTWIGSLSLGDARYINFREVDLLTRYV. The segment at residues 256–275 is an intramembrane region (pore-forming); the sequence is TSLYLAIVTMATVGYGDIHA. Residues 276 to 285 lie on the Extracellular side of the membrane; it reads VNTREMAFTV. The chain crosses the membrane as a helical span at residues 286–306; that stretch reads VYISFSIVLSAYLIGNMTALI. The Cytoplasmic segment spans residues 307 to 719; the sequence is VKGSRTERFR…LEQARTVATN (413 aa). An a nucleoside 3',5'-cyclic phosphate-binding site is contributed by 383–503; sequence LFRGCSDDFL…SQILSNLLKG (121 aa). ANK repeat units follow at residues 523–556, 560–589, 593–622, 624–653, and 657–686; these read KQES…DPSK, DGRT…NVNS, FGNS…ILNL, DAGG…SPNC, and DQRT…DIQA.

The protein belongs to the potassium channel family. Plant (TC 1.A.1.4) subfamily.

It is found in the membrane. In terms of biological role, probable outward-rectifying potassium channel. The chain is Potassium channel KOR2 from Oryza sativa subsp. japonica (Rice).